A 577-amino-acid chain; its full sequence is Arginine--tRNA ligase (577 aa).

A 'HIGH' region motif is present at residues 122 to 132 (PNVAKEMHVGH).

It belongs to the class-I aminoacyl-tRNA synthetase family. As to quaternary structure, monomer.

The protein resides in the cytoplasm. It carries out the reaction tRNA(Arg) + L-arginine + ATP = L-arginyl-tRNA(Arg) + AMP + diphosphate. In Haemophilus influenzae (strain 86-028NP), this protein is Arginine--tRNA ligase.